A 327-amino-acid chain; its full sequence is Beta-ketoacyl-[acyl-carrier-protein] synthase III (327 aa).

Catalysis depends on residues cysteine 112 and histidine 253. The tract at residues 254–258 is ACP-binding; sequence QANER. Residue asparagine 283 is part of the active site.

The protein belongs to the thiolase-like superfamily. FabH family. Homodimer.

Its subcellular location is the cytoplasm. It carries out the reaction malonyl-[ACP] + acetyl-CoA + H(+) = 3-oxobutanoyl-[ACP] + CO2 + CoA. The protein operates within lipid metabolism; fatty acid biosynthesis. In terms of biological role, catalyzes the condensation reaction of fatty acid synthesis by the addition to an acyl acceptor of two carbons from malonyl-ACP. Catalyzes the first condensation reaction which initiates fatty acid synthesis and may therefore play a role in governing the total rate of fatty acid production. Possesses both acetoacetyl-ACP synthase and acetyl transacylase activities. Its substrate specificity determines the biosynthesis of branched-chain and/or straight-chain of fatty acids. The chain is Beta-ketoacyl-[acyl-carrier-protein] synthase III from Chlamydia muridarum (strain MoPn / Nigg).